A 455-amino-acid polypeptide reads, in one-letter code: Protein U54 (455 aa).

The protein belongs to the herpesviridae UL82 family.

This Homo sapiens (Human) protein is Protein U54 (U54).